The sequence spans 127 residues: Spore germination protein 2 (127 aa).

A signal peptide spans 1–25 (MNIRNSLILIISTILFFSIINGSLS). N-linked (GlcNAc...) asparagine glycans are attached at residues Asn-54 and Asn-118.

Belongs to the Dictyostelium gerABC family.

Its subcellular location is the secreted. In Dictyostelium discoideum (Social amoeba), this protein is Spore germination protein 2 (gerB).